Consider the following 349-residue polypeptide: Protein MGF 360-12L (349 aa).

The stretch at 57-89 is one ANK repeat; the sequence is DLNTALVKAVRENNYNLIKLFTEWGADINYGLV.

The protein belongs to the asfivirus MGF 360 family.

Plays a role in virus cell tropism, and may be required for efficient virus replication in macrophages. The protein is Protein MGF 360-12L of African swine fever virus (isolate Tick/Malawi/Lil 20-1/1983) (ASFV).